A 29-amino-acid polypeptide reads, in one-letter code: Glucagon (29 aa).

A Phosphoserine modification is found at Ser-2.

It belongs to the glucagon family.

It is found in the secreted. Its function is as follows. Glucagon plays a key role in glucose metabolism and homeostasis. Regulates blood glucose by increasing gluconeogenesis and decreasing glycolysis. The protein is Glucagon (GCG) of Oryctolagus cuniculus (Rabbit).